A 645-amino-acid chain; its full sequence is MLKFRIRPVRHIRCYKRHAYFLRYNHTTTPAQKLQAQIEQIPLENYRNFSIVAHVDHGKSTLSDRLLEITHVIDPNARNKQVLDKLEVERERGITIKAQTCSMFYKDKRTGKNYLLHLIDTPGHVDFRGEVSRSYASCGGAILLVDASQGIQAQTVANFYLAFSLGLKLIPVINKIDLNFTDVKQVKDQIVNNFELPEEDIIGVSAKTGLNVEELLLPAIIDRIPPPTGRPDKPFRALLVDSWYDAYLGAVLLVNIVDGFVRKNDKVICAQTKEKYEVKDIGIMYPDRTSTGTLKTGQVGYLVLGMKDSKEAKIGDTIMHLSKVNETEVLPGFEEQKPMVFVGAFPADGIEFKAMDDDMSRLVLNDRSVTLERETSNALGQGWRLGFLGSLHASVFRERLEKEYGSKLIITQPTVPYLVEFTDGKKKLITNPDEFPDGATKRVNVAAFHEPFIEAVMTLPQEYLGSVIRLCDSNRGEQIDITYLNTNGQVMLKYYLPLSHLVDDFFGKLKSVSRGFASLDYEDAGYRISDVVKLQLLVNGNAIDALSRVLHKSEVERVGREWVKKFKEYVKSQLYEVVIQARANNKIIARETIKARRKDVLQKLHASDVSRRKKLLAKQKEGKKHMKTVGNIQINQEAYQAFLRR.

Positions Glu44–Thr228 constitute a tr-type G domain. GTP-binding positions include Ala53 to Ser60, Asp120 to His124, and Asn174 to Asp177.

The protein belongs to the TRAFAC class translation factor GTPase superfamily. Classic translation factor GTPase family. LepA subfamily.

The protein localises to the mitochondrion inner membrane. It carries out the reaction GTP + H2O = GDP + phosphate + H(+). Its function is as follows. Promotes mitochondrial protein synthesis. May act as a fidelity factor of the translation reaction, by catalyzing a one-codon backward translocation of tRNAs on improperly translocated ribosomes. Binds to mitochondrial ribosomes in a GTP-dependent manner. The chain is Translation factor GUF1, mitochondrial from Saccharomyces cerevisiae (strain RM11-1a) (Baker's yeast).